A 278-amino-acid chain; its full sequence is 4-deoxy-L-threo-5-hexosulose-uronate ketol-isomerase (278 aa).

Residues H196, H198, E203, and H245 each coordinate Zn(2+).

The protein belongs to the KduI family. Requires Zn(2+) as cofactor.

It catalyses the reaction 5-dehydro-4-deoxy-D-glucuronate = 3-deoxy-D-glycero-2,5-hexodiulosonate. It participates in glycan metabolism; pectin degradation; 2-dehydro-3-deoxy-D-gluconate from pectin: step 4/5. Its function is as follows. Catalyzes the isomerization of 5-dehydro-4-deoxy-D-glucuronate to 3-deoxy-D-glycero-2,5-hexodiulosonate. In Salmonella paratyphi A (strain ATCC 9150 / SARB42), this protein is 4-deoxy-L-threo-5-hexosulose-uronate ketol-isomerase.